The chain runs to 146 residues: Protein disulfide-isomerase 5-1 (146 aa).

Residues 1–25 (MTLGARLVAPMIILLLFIPIELVKA) form the signal peptide. In terms of domain architecture, Thioredoxin spans 26-133 (EVITLTPETF…LKAFVVEETE (108 aa)). Residues Cys-55 and Cys-58 each act as nucleophile in the active site. A disulfide bridge links Cys-55 with Cys-58.

This sequence belongs to the protein disulfide isomerase family.

Functionally, acts as a protein-folding catalyst that interacts with nascent polypeptides to catalyze the formation, isomerization, and reduction or oxidation of disulfide bonds. The chain is Protein disulfide-isomerase 5-1 (PDIL5-1) from Arabidopsis thaliana (Mouse-ear cress).